Consider the following 326-residue polypeptide: uncharacterized protein (326 aa).

The protein to B.subtilis XkdQ.

This is an uncharacterized protein from Bacillus subtilis (strain 168).